We begin with the raw amino-acid sequence, 336 residues long: D-alanine--D-alanine ligase (336 aa).

Residues 124 to 330 enclose the ATP-grasp domain; sequence KMWFSALGIP…FTEYLSLVIK (207 aa). ATP is bound at residue 154-209; the sequence is ALENWGSIFVKAASQGSSVGCYKVDDSSKVAGVLKDAFGYAPYVIVEKTIKARELE. 3 residues coordinate Mg(2+): Asp-284, Glu-297, and Asn-299.

Belongs to the D-alanine--D-alanine ligase family. It depends on Mg(2+) as a cofactor. The cofactor is Mn(2+).

The protein resides in the cytoplasm. The enzyme catalyses 2 D-alanine + ATP = D-alanyl-D-alanine + ADP + phosphate + H(+). The protein operates within cell wall biogenesis; peptidoglycan biosynthesis. In terms of biological role, cell wall formation. In Shewanella sp. (strain MR-7), this protein is D-alanine--D-alanine ligase.